We begin with the raw amino-acid sequence, 397 residues long: DnaJ homolog subfamily A member 1 (397 aa).

The region spanning 6-68 (TYYDVLGVKP…KKRELYDKGG (63 aa)) is the J domain. The residue at position 66 (lysine 66) is an N6-acetyllysine. Serine 83 is subject to Phosphoserine. A CR-type zinc finger spans residues 121–205 (GATRKLALQK…CNGRKIVREK (85 aa)). Residues cysteine 134, cysteine 137, cysteine 150, cysteine 153, cysteine 177, cysteine 180, cysteine 193, and cysteine 196 each coordinate Zn(2+). 4 CXXCXGXG motif repeats span residues 134-141 (CDKCEGRG), 150-157 (CPNCRGTG), 177-184 (CMECQGHG), and 193-200 (CKSCNGRK). The residue at position 335 (serine 335) is a Phosphoserine. Residues 352 to 397 (VEETDEMDQVELVDFDPNQERRRHYNGEAYEDDEHHPRGGVQCQTS) are disordered. Acidic residues predominate over residues 353 to 365 (EETDEMDQVELVD). Position 381 is a phosphotyrosine (tyrosine 381). Cysteine 394 carries the post-translational modification Cysteine methyl ester. Residue cysteine 394 is the site of S-farnesyl cysteine attachment. The propeptide at 395–397 (QTS) is removed in mature form.

In terms of assembly, identified in a complex with HSPA1B and BAX. Interacts with RNF207.

The protein localises to the membrane. The protein resides in the cytoplasm. It is found in the microsome. Its subcellular location is the mitochondrion. It localises to the nucleus. The protein localises to the perinuclear region. Its function is as follows. Co-chaperone for HSPA8/Hsc70. Plays a role in protein transport into mitochondria via its role as co-chaperone. Stimulates ATP hydrolysis, but not the folding of unfolded proteins mediated by HSPA1A (in vitro). Promotes apoptosis in response to cellular stress mediated by exposure to anisomycin or UV. Functions as co-chaperone for HSPA1B and negatively regulates the translocation of BAX from the cytosol to mitochondria in response to cellular stress, thereby protecting cells against apoptosis. The protein is DnaJ homolog subfamily A member 1 (Dnaja1) of Mus musculus (Mouse).